A 140-amino-acid chain; its full sequence is Organic hydroperoxide resistance protein-like (140 aa).

This sequence belongs to the OsmC/Ohr family.

The polypeptide is Organic hydroperoxide resistance protein-like (Staphylococcus aureus (strain USA300)).